A 154-amino-acid polypeptide reads, in one-letter code: Myoglobin (154 aa).

The region spanning 2-148 is the Globin domain; that stretch reads GLSDGEWQLV…FRNDIAAKYK (147 aa). Phosphoserine is present on S4. Residue H65 coordinates nitrite. Residue H65 participates in O2 binding. T68 bears the Phosphothreonine mark. Heme b is bound at residue H94.

It belongs to the globin family. In terms of assembly, monomeric.

The protein localises to the cytoplasm. It is found in the sarcoplasm. It catalyses the reaction Fe(III)-heme b-[protein] + nitric oxide + H2O = Fe(II)-heme b-[protein] + nitrite + 2 H(+). The enzyme catalyses H2O2 + AH2 = A + 2 H2O. In terms of biological role, monomeric heme protein which primary function is to store oxygen and facilitate its diffusion within muscle tissues. Reversibly binds oxygen through a pentacoordinated heme iron and enables its timely and efficient release as needed during periods of heightened demand. Depending on the oxidative conditions of tissues and cells, and in addition to its ability to bind oxygen, it also has a nitrite reductase activity whereby it regulates the production of bioactive nitric oxide. Under stress conditions, like hypoxia and anoxia, it also protects cells against reactive oxygen species thanks to its pseudoperoxidase activity. The protein is Myoglobin (MB) of Meles meles (Eurasian badger).